A 53-amino-acid chain; its full sequence is Large ribosomal subunit protein bL33 (53 aa).

It belongs to the bacterial ribosomal protein bL33 family.

The polypeptide is Large ribosomal subunit protein bL33 (Ureaplasma parvum serovar 3 (strain ATCC 27815 / 27 / NCTC 11736)).